Reading from the N-terminus, the 217-residue chain is Proteasome subunit beta type-6-A like protein (217 aa).

Positions 1 to 16 (MERHLMDSQIKGVSTG) are cleaved as a propeptide — removed in mature form. Threonine 17 (nucleophile) is an active-site residue.

Belongs to the peptidase T1B family. The 26S proteasome consists of a 20S proteasome core and two 19S regulatory subunits. The 20S proteasome core is composed of 28 subunits that are arranged in four stacked rings, resulting in a barrel-shaped structure. The two end rings are each formed by seven alpha subunits, and the two central rings are each formed by seven beta subunits. The catalytic chamber with the active sites is on the inside of the barrel.

The protein resides in the cytoplasm. The protein localises to the nucleus. It carries out the reaction Cleavage of peptide bonds with very broad specificity.. In terms of biological role, the proteasome is a multicatalytic proteinase complex which is characterized by its ability to cleave peptides with Arg, Phe, Tyr, Leu, and Glu adjacent to the leaving group at neutral or slightly basic pH. The proteasome has an ATP-dependent proteolytic activity. This subunit is involved in antigen processing to generate class I binding peptides. This Salmo salar (Atlantic salmon) protein is Proteasome subunit beta type-6-A like protein (psmb6l-a).